Consider the following 357-residue polypeptide: S-adenosylmethionine:tRNA ribosyltransferase-isomerase (357 aa).

This sequence belongs to the QueA family. Monomer.

It localises to the cytoplasm. It carries out the reaction 7-aminomethyl-7-carbaguanosine(34) in tRNA + S-adenosyl-L-methionine = epoxyqueuosine(34) in tRNA + adenine + L-methionine + 2 H(+). It participates in tRNA modification; tRNA-queuosine biosynthesis. Its function is as follows. Transfers and isomerizes the ribose moiety from AdoMet to the 7-aminomethyl group of 7-deazaguanine (preQ1-tRNA) to give epoxyqueuosine (oQ-tRNA). In Edwardsiella ictaluri (strain 93-146), this protein is S-adenosylmethionine:tRNA ribosyltransferase-isomerase.